Here is a 141-residue protein sequence, read N- to C-terminus: Mitochondrial import inner membrane translocase subunit tim16 (141 aa).

Residues glutamate 59–lysine 117 are J-like. Residues lysine 119–arginine 141 form a disordered region.

The protein belongs to the TIM16/PAM16 family. Heterodimer with tim14/pam18. Component of the PAM complex, at least composed of hsp70-5/ssc1, grpe/mge1, tim44, un-4/pam16, pam17 and tim14/pam18.

It localises to the mitochondrion inner membrane. In terms of biological role, essential component of the PAM complex, a complex required for the translocation of transit peptide-containing proteins from the inner membrane into the mitochondrial matrix in an ATP-dependent manner. In the complex, it is required to regulate activity of mtHSP70 (hsp70-5) via its interaction with tim14/pam18. May act by positioning tim14/pam18 in juxtaposition to mtHSP70 at the translocon to maximize ATPase stimulation. This Neurospora crassa (strain ATCC 24698 / 74-OR23-1A / CBS 708.71 / DSM 1257 / FGSC 987) protein is Mitochondrial import inner membrane translocase subunit tim16 (un-4).